Here is a 251-residue protein sequence, read N- to C-terminus: CDP-diacylglycerol pyrophosphatase (251 aa).

Residues 4–24 form a helical membrane-spanning segment; sequence AGLLFLVMIVIAVVAAGIGYW.

This sequence belongs to the Cdh family.

It is found in the cell inner membrane. It carries out the reaction a CDP-1,2-diacyl-sn-glycerol + H2O = a 1,2-diacyl-sn-glycero-3-phosphate + CMP + 2 H(+). Its pathway is phospholipid metabolism; CDP-diacylglycerol degradation; phosphatidate from CDP-diacylglycerol: step 1/1. The protein is CDP-diacylglycerol pyrophosphatase of Escherichia coli O9:H4 (strain HS).